The sequence spans 514 residues: MNEPTRIPKYVKDKIRQAKQGDLYSSFTVSEYYYDGEVLERDIEQSELYLRNVSRIINNAKIRLRNISLYDYKKFSKLKFTSSEKNTTIIIGNNGSGKSTILESISKCLQFLSDNIRIQNNNNYKFQDSEINIHSISGQTIVRCILEIENDFSFSCSLTKNRENISRKVSSELEEFKALARMYQRSNELDNNTLSYPLLAYYPVERSVTLKRDDAVKYYERKKAKYSDKSEGLKNAFDGTSNFNDFFSWYKEIDDIINEFKANDSITKEEIEYLLSKTDNKEKIGSLISQLLEKKNNYNNNEDREFLIRQQKVIQESIKTFVSDIDQVKISRTPHLDMTVIKNGSEISIFNLSQGEKTLIALVSDIARRLVILNPSLENPLNGYGIVLIDEIDLHLHPKWQQTIVQKLENTFPNIQFILSTHSPLVLTTVTSEQIKIINELDYRFKLLSPTSNPFGKNASDALAIMETSESPLVHSEEILALIKKYESLVKRGQEDCRKTKEIKKTHRKHWIYI.

Residues 92–99 carry the ATP-binding motif; it reads GNNGSGKS.

Its function is as follows. Probable ATPase component of antiviral defense system retron Vc95, composed of a non-coding RNA (ncRNA), a reverse transcriptase (RT), this protein and a putative HNH endonuclease. Expression of retron Vc95 confers protection against bacteriophages T2, T4 and T6. At multiplicity of infection (MOI) of 0.02 cultures slow growth when infected with T4 but do not collapse, at MOI 2 cultures enter growth stasis. The polypeptide is Retron Vc95 probable ATPase (Vibrio cholerae serotype O1 biovar El Tor).